A 232-amino-acid chain; its full sequence is Ubiquinone biosynthesis O-methyltransferase (232 aa).

S-adenosyl-L-methionine contacts are provided by R36, G55, D76, and M120.

This sequence belongs to the methyltransferase superfamily. UbiG/COQ3 family.

It catalyses the reaction a 3-demethylubiquinol + S-adenosyl-L-methionine = a ubiquinol + S-adenosyl-L-homocysteine + H(+). The enzyme catalyses a 3-(all-trans-polyprenyl)benzene-1,2-diol + S-adenosyl-L-methionine = a 2-methoxy-6-(all-trans-polyprenyl)phenol + S-adenosyl-L-homocysteine + H(+). It participates in cofactor biosynthesis; ubiquinone biosynthesis. Its function is as follows. O-methyltransferase that catalyzes the 2 O-methylation steps in the ubiquinone biosynthetic pathway. The chain is Ubiquinone biosynthesis O-methyltransferase from Burkholderia vietnamiensis (strain G4 / LMG 22486) (Burkholderia cepacia (strain R1808)).